The following is a 387-amino-acid chain: Yellow-related salivary protein ASP2 (387 aa).

Positions 1–18 (MKIFLCLIVVVSLQGVLA) are cleaved as a signal peptide.

The protein belongs to the major royal jelly protein family. In terms of tissue distribution, female salivary gland (at protein level).

The protein resides in the secreted. Functionally, probably modulates blood feeding of sand flies on vertebrate species by binding and sequestering different mediators involved in the host response. Binds biogenic amines. Binds octopamine with high affinity. Binds serotonin and dopamine with medium affinity. Poorly binds histamine. Does not bind noradrenaline and adrenaline. The sequence is that of Yellow-related salivary protein ASP2 from Phlebotomus orientalis (Phlebotomine sand fly).